A 217-amino-acid chain; its full sequence is tRNA (guanine-N(7)-)-methyltransferase (217 aa).

S-adenosyl-L-methionine is bound by residues glutamate 45, glutamate 70, aspartate 97, and aspartate 119. Residue aspartate 119 is part of the active site. Lysine 123 provides a ligand contact to substrate. An interaction with RNA region spans residues 125 to 130; sequence RHEKRR. Substrate contacts are provided by residues aspartate 155 and 195-198; that span reads TEYE.

It belongs to the class I-like SAM-binding methyltransferase superfamily. TrmB family.

It catalyses the reaction guanosine(46) in tRNA + S-adenosyl-L-methionine = N(7)-methylguanosine(46) in tRNA + S-adenosyl-L-homocysteine. Its pathway is tRNA modification; N(7)-methylguanine-tRNA biosynthesis. Functionally, catalyzes the formation of N(7)-methylguanine at position 46 (m7G46) in tRNA. This is tRNA (guanine-N(7)-)-methyltransferase from Lactobacillus helveticus (strain DPC 4571).